Reading from the N-terminus, the 227-residue chain is Cytidylate kinase (227 aa).

ATP is bound at residue 12–20; the sequence is GPSGAGKGT.

This sequence belongs to the cytidylate kinase family. Type 1 subfamily.

It is found in the cytoplasm. It carries out the reaction CMP + ATP = CDP + ADP. It catalyses the reaction dCMP + ATP = dCDP + ADP. The sequence is that of Cytidylate kinase from Citrobacter koseri (strain ATCC BAA-895 / CDC 4225-83 / SGSC4696).